The following is a 428-amino-acid chain: Serine--tRNA ligase (428 aa).

Residue 235 to 237 (TAE) coordinates L-serine. 266–268 (RSE) is an ATP binding site. Position 289 (glutamate 289) interacts with L-serine. 353-356 (EISS) is a binding site for ATP. Residue serine 389 coordinates L-serine.

This sequence belongs to the class-II aminoacyl-tRNA synthetase family. Type-1 seryl-tRNA synthetase subfamily. As to quaternary structure, homodimer. The tRNA molecule binds across the dimer.

The protein resides in the cytoplasm. It carries out the reaction tRNA(Ser) + L-serine + ATP = L-seryl-tRNA(Ser) + AMP + diphosphate + H(+). It catalyses the reaction tRNA(Sec) + L-serine + ATP = L-seryl-tRNA(Sec) + AMP + diphosphate + H(+). The protein operates within aminoacyl-tRNA biosynthesis; selenocysteinyl-tRNA(Sec) biosynthesis; L-seryl-tRNA(Sec) from L-serine and tRNA(Sec): step 1/1. Catalyzes the attachment of serine to tRNA(Ser). Is also able to aminoacylate tRNA(Sec) with serine, to form the misacylated tRNA L-seryl-tRNA(Sec), which will be further converted into selenocysteinyl-tRNA(Sec). This is Serine--tRNA ligase from Shewanella loihica (strain ATCC BAA-1088 / PV-4).